The sequence spans 477 residues: Asparaginyl-tRNA synthetase (477 aa).

A mitochondrion-targeting transit peptide spans 1–14 (MLGARRLLGALRLC). Lys353 carries the post-translational modification N6-acetyllysine.

Belongs to the class-II aminoacyl-tRNA synthetase family. In terms of assembly, homodimer. As to expression, expressed in brain and inner ear, including the cochlear epithelium and organ of Corti.

The protein localises to the mitochondrion matrix. It localises to the mitochondrion. It carries out the reaction tRNA(Asn) + L-asparagine + ATP = L-asparaginyl-tRNA(Asn) + AMP + diphosphate + H(+). In terms of biological role, mitochondrial aminoacyl-tRNA synthetase that catalyzes the specific attachment of the asparagine amino acid (aa) to the homologous transfer RNA (tRNA), further participating in protein synthesis. The reaction occurs in a two steps: asparagine is first activated by ATP to form Asn-AMP and then transferred to the acceptor end of tRNA(Asn). This Mus musculus (Mouse) protein is Asparaginyl-tRNA synthetase.